We begin with the raw amino-acid sequence, 174 residues long: Alkyl hydroperoxide reductase AhpD (174 aa).

Catalysis depends on C130, which acts as the Proton donor. Residues C130 and C133 are joined by a disulfide bond. C133 functions as the Cysteine sulfenic acid (-SOH) intermediate in the catalytic mechanism.

It belongs to the AhpD family. As to quaternary structure, homotrimer.

The catalysed reaction is N(6)-[(R)-dihydrolipoyl]-L-lysyl-[lipoyl-carrier protein] + a hydroperoxide = N(6)-[(R)-lipoyl]-L-lysyl-[lipoyl-carrier protein] + an alcohol + H2O. Its function is as follows. Antioxidant protein with alkyl hydroperoxidase activity. Required for the reduction of the AhpC active site cysteine residues and for the regeneration of the AhpC enzyme activity. This is Alkyl hydroperoxide reductase AhpD from Corynebacterium kroppenstedtii (strain DSM 44385 / JCM 11950 / CIP 105744 / CCUG 35717).